Reading from the N-terminus, the 461-residue chain is Bifunctional protein GlmU (461 aa).

Positions 1 to 234 (MSLSVVILAA…EIEVEGANNR (234 aa)) are pyrophosphorylase. Residues 8 to 11 (LAAG), Lys-22, Gln-77, 82 to 83 (GT), 104 to 106 (YGD), Gly-141, Glu-159, Asn-174, and Asn-232 each bind UDP-N-acetyl-alpha-D-glucosamine. Position 106 (Asp-106) interacts with Mg(2+). Position 232 (Asn-232) interacts with Mg(2+). The tract at residues 235 to 255 (VQLATLERAYQARIAEELMIA) is linker. The N-acetyltransferase stretch occupies residues 256 to 461 (GASLRDPARI…AGWQRPVKKS (206 aa)). 2 residues coordinate UDP-N-acetyl-alpha-D-glucosamine: Arg-338 and Lys-356. His-368 functions as the Proton acceptor in the catalytic mechanism. UDP-N-acetyl-alpha-D-glucosamine is bound by residues Tyr-371 and Asn-382. Acetyl-CoA contacts are provided by residues Ala-385, 391–392 (NY), Ser-410, Ala-428, and Arg-445.

It in the N-terminal section; belongs to the N-acetylglucosamine-1-phosphate uridyltransferase family. In the C-terminal section; belongs to the transferase hexapeptide repeat family. In terms of assembly, homotrimer. Mg(2+) is required as a cofactor.

The protein resides in the cytoplasm. It catalyses the reaction alpha-D-glucosamine 1-phosphate + acetyl-CoA = N-acetyl-alpha-D-glucosamine 1-phosphate + CoA + H(+). It carries out the reaction N-acetyl-alpha-D-glucosamine 1-phosphate + UTP + H(+) = UDP-N-acetyl-alpha-D-glucosamine + diphosphate. It participates in nucleotide-sugar biosynthesis; UDP-N-acetyl-alpha-D-glucosamine biosynthesis; N-acetyl-alpha-D-glucosamine 1-phosphate from alpha-D-glucosamine 6-phosphate (route II): step 2/2. It functions in the pathway nucleotide-sugar biosynthesis; UDP-N-acetyl-alpha-D-glucosamine biosynthesis; UDP-N-acetyl-alpha-D-glucosamine from N-acetyl-alpha-D-glucosamine 1-phosphate: step 1/1. Its pathway is bacterial outer membrane biogenesis; LPS lipid A biosynthesis. Its function is as follows. Catalyzes the last two sequential reactions in the de novo biosynthetic pathway for UDP-N-acetylglucosamine (UDP-GlcNAc). The C-terminal domain catalyzes the transfer of acetyl group from acetyl coenzyme A to glucosamine-1-phosphate (GlcN-1-P) to produce N-acetylglucosamine-1-phosphate (GlcNAc-1-P), which is converted into UDP-GlcNAc by the transfer of uridine 5-monophosphate (from uridine 5-triphosphate), a reaction catalyzed by the N-terminal domain. This is Bifunctional protein GlmU from Colwellia psychrerythraea (strain 34H / ATCC BAA-681) (Vibrio psychroerythus).